The sequence spans 106 residues: Hydrogenase expression/formation protein HoxL (106 aa).

This sequence belongs to the HupF/HypC family.

The sequence is that of Hydrogenase expression/formation protein HoxL (hoxL) from Azotobacter vinelandii.